The sequence spans 359 residues: tRNA-specific 2-thiouridylase MnmA (359 aa).

Residues 6-13 (AMSGGVDS) and Leu-32 contribute to the ATP site. Cys-97 acts as the Nucleophile in catalysis. A disulfide bond links Cys-97 and Cys-195. Position 121 (Gly-121) interacts with ATP. An interaction with tRNA region spans residues 144–146 (KDQ). Cys-195 (cysteine persulfide intermediate) is an active-site residue.

Belongs to the MnmA/TRMU family.

It is found in the cytoplasm. The enzyme catalyses S-sulfanyl-L-cysteinyl-[protein] + uridine(34) in tRNA + AH2 + ATP = 2-thiouridine(34) in tRNA + L-cysteinyl-[protein] + A + AMP + diphosphate + H(+). Its function is as follows. Catalyzes the 2-thiolation of uridine at the wobble position (U34) of tRNA, leading to the formation of s(2)U34. This chain is tRNA-specific 2-thiouridylase MnmA, found in Tropheryma whipplei (strain Twist) (Whipple's bacillus).